The chain runs to 191 residues: Ciliary microtubule-associated protein 3 (191 aa).

Interacts with proteins involved in ciliary transport, including ARL13B, CETN1, KIF3A, RAB6A, RAB8A, TUBB1 and TUBG1. Interacts with AURKA.

It localises to the cytoplasmic vesicle. The protein resides in the golgi apparatus. It is found in the trans-Golgi network. Its subcellular location is the cytoplasm. During primary cilia disassembly, involved in cilia disassembly. Required specifically to control cilia retraction as well as the liberation and duplication of the basal body/centrosome. May act by stimulating AURKA activity at the basal body in a cell cycle-dependent manner. The polypeptide is Ciliary microtubule-associated protein 3 (Homo sapiens (Human)).